The following is a 1019-amino-acid chain: MDSTGRAYDGASEFKSVLVTEGTSHYTPVEVYNILDELKTIKITSTIAEQSVVSRTPIPLSKIGLSDVKKLFDINVIKCGSSLRIVDEPQVTFIVSYAKDIYDKFMCIEHDSAYEPSLTMHRVRVIYSMLNDYCAKMISEVPYESSFVGELPVKSVTLNKLGDRNMDALAEHLLFEQDVVNAQRENRIFYQRKSAPAVPVTFGDDLEPAVRERANLYHRYSVPYHQIELALHALANDLLSIQYCHPTVVYNYLSSRAPNFLRLDDQVSLKLTSAGIGTLMPRPVVQLLDYDLVYMSPLALNNLASRLLRKISLHLVMQMVTAVQQDLGEVVSVSSNVTNPASACLVRMNVQGVQTLAVFIAQSMLNPNISYGMLSGLTLDCFSNFIYGACLMLFQALIPPSALTARQRLDINNRFAYFLIKCHATQATTASVVPNQVIYPVDAIDQWQSNRRDVLVAIYNNLLPGELVLSNLIQTYFRGNTAQQAAEILIPADQTSYGANETRALSAPYLFGAPINMLAPDARLSTYKRDLALPDRSPILITTVEGQNSISIEILRHKTGLIRAMYLNGFVTQPPAWIRNANSNTALLSRFLDVTPNLLGIYEAILANTYANAVNVYCDSVYRADIPTEWKLHQSVDPQDLLFGVFGIVPQYQILNEAVPDFFAGGEDILILQLIRAVYDTLSNKLGRNPADIFHLDEVFKVIEEIVSVLVQQKVDARKYFTESMRSGSFSKPRWDNFLRRPVAQRLPNLDSVIMTQADHVYNYMTQLTHIIPITDCFYIVKNSGFVDRGSTGPVMASSSVYENVLKVVHTIADFEAANALRLQRRSVDNTSYTDSLSDMFNGLRSISSSEFVRSVNGRSVFTEGRIDAIKVNMRVKFDLQFITEEGGYSKPPNVKKLMFSDFLSFLDSHKSDYRPPLLTVPITIGLNNLGETNSNTLRMRSEAIDEYFSSYVGAQILVPINVVDTRVYTEFSELRNFFTGDVVITDDPFDVWDGVKATYIPIGVHGVRLDPNGDQPPL.

This sequence belongs to the phytoreovirus inner capsid protein P3 family. As to quaternary structure, homodimer. Homomultimer.

Its subcellular location is the virion. The protein localises to the host cytoplasm. In terms of biological role, capsid protein which self-assembles to form the inner icosahedral capsid with a T=2 symmetry, and consisting of 60 P3 dimers. This is Outer capsid protein P3 from Rice dwarf virus (isolate Fujian) (RDV).